Reading from the N-terminus, the 398-residue chain is 1-deoxy-D-xylulose 5-phosphate reductoisomerase (398 aa).

The NADPH site is built by threonine 10, glycine 11, serine 12, isoleucine 13, glycine 36, lysine 37, asparagine 38, and asparagine 124. A 1-deoxy-D-xylulose 5-phosphate-binding site is contributed by lysine 125. Residue glutamate 126 participates in NADPH binding. Aspartate 150 is a Mn(2+) binding site. 1-deoxy-D-xylulose 5-phosphate is bound by residues serine 151, glutamate 152, serine 186, and histidine 209. Glutamate 152 is a binding site for Mn(2+). Glycine 215 is a binding site for NADPH. 1-deoxy-D-xylulose 5-phosphate contacts are provided by serine 222, asparagine 227, lysine 228, and glutamate 231. Glutamate 231 contacts Mn(2+).

Belongs to the DXR family. As to quaternary structure, homodimer. Requires Mg(2+) as cofactor. Mn(2+) serves as cofactor.

The catalysed reaction is 2-C-methyl-D-erythritol 4-phosphate + NADP(+) = 1-deoxy-D-xylulose 5-phosphate + NADPH + H(+). It participates in isoprenoid biosynthesis; isopentenyl diphosphate biosynthesis via DXP pathway; isopentenyl diphosphate from 1-deoxy-D-xylulose 5-phosphate: step 1/6. In terms of biological role, catalyzes the NADPH-dependent rearrangement and reduction of 1-deoxy-D-xylulose-5-phosphate (DXP) to 2-C-methyl-D-erythritol 4-phosphate (MEP). This Salmonella paratyphi A (strain ATCC 9150 / SARB42) protein is 1-deoxy-D-xylulose 5-phosphate reductoisomerase.